Consider the following 267-residue polypeptide: Cell cycle checkpoint protein RAD1 homolog mrt-2 (267 aa).

It belongs to the Rad1 family. Probable component of the toroidal 9-1-1 (RAD9-RAD1-HUS1) complex, composed of hpr-9, mrt-2 and hus-1. Interacts with hus-1. Might associate with hpr-9.

The protein resides in the nucleus. It carries out the reaction Exonucleolytic cleavage in the 3'- to 5'-direction to yield nucleoside 5'-phosphates.. Functionally, may be a component of the 9-1-1 cell-cycle checkpoint response complex that plays a major role in DNA repair. Promotes DNA double strand break-induced cell cycle arrest and apoptosis, thereby playing a role in genome stability. Also required for telomere length maintenance and germline immortality. May possess 3'-&gt;5' double stranded DNA exonuclease activity. This is Cell cycle checkpoint protein RAD1 homolog mrt-2 from Caenorhabditis elegans.